Reading from the N-terminus, the 468-residue chain is Cysteine--tRNA ligase (468 aa).

Cys-33 provides a ligand contact to Zn(2+). The 'HIGH' region signature appears at 35 to 45 (ATVQGLPHIGH). Positions 211, 236, and 240 each coordinate Zn(2+). A 'KMSKS' region motif is present at residues 267–271 (KMSKS). Lys-270 is a binding site for ATP.

The protein belongs to the class-I aminoacyl-tRNA synthetase family. Monomer. Zn(2+) is required as a cofactor.

Its subcellular location is the cytoplasm. The enzyme catalyses tRNA(Cys) + L-cysteine + ATP = L-cysteinyl-tRNA(Cys) + AMP + diphosphate. The sequence is that of Cysteine--tRNA ligase from Mycobacterium avium (strain 104).